Consider the following 80-residue polypeptide: Exodeoxyribonuclease 7 small subunit (80 aa).

It belongs to the XseB family. As to quaternary structure, heterooligomer composed of large and small subunits.

The protein resides in the cytoplasm. It catalyses the reaction Exonucleolytic cleavage in either 5'- to 3'- or 3'- to 5'-direction to yield nucleoside 5'-phosphates.. Bidirectionally degrades single-stranded DNA into large acid-insoluble oligonucleotides, which are then degraded further into small acid-soluble oligonucleotides. The polypeptide is Exodeoxyribonuclease 7 small subunit (Marinomonas sp. (strain MWYL1)).